The following is a 147-amino-acid chain: NADH-quinone oxidoreductase subunit A (147 aa).

3 consecutive transmembrane segments (helical) span residues 16–36, 68–88, and 97–117; these read FAIF…GGWF, FYLV…LFAW, and WVGF…LVYL.

The protein belongs to the complex I subunit 3 family. As to quaternary structure, NDH-1 is composed of 13 different subunits. Subunits NuoA, H, J, K, L, M, N constitute the membrane sector of the complex.

The protein resides in the cell inner membrane. It catalyses the reaction a quinone + NADH + 5 H(+)(in) = a quinol + NAD(+) + 4 H(+)(out). In terms of biological role, NDH-1 shuttles electrons from NADH, via FMN and iron-sulfur (Fe-S) centers, to quinones in the respiratory chain. The immediate electron acceptor for the enzyme in this species is believed to be ubiquinone. Couples the redox reaction to proton translocation (for every two electrons transferred, four hydrogen ions are translocated across the cytoplasmic membrane), and thus conserves the redox energy in a proton gradient. This is NADH-quinone oxidoreductase subunit A from Salmonella paratyphi A (strain ATCC 9150 / SARB42).